Here is a 619-residue protein sequence, read N- to C-terminus: 1-deoxy-D-xylulose-5-phosphate synthase (619 aa).

Residues H74 and 115–117 (GHS) each bind thiamine diphosphate. Position 146 (D146) interacts with Mg(2+). Thiamine diphosphate contacts are provided by residues 147-148 (GA), N175, Y285, and E365. Residue N175 coordinates Mg(2+).

This sequence belongs to the transketolase family. DXPS subfamily. Homodimer. It depends on Mg(2+) as a cofactor. Requires thiamine diphosphate as cofactor.

The catalysed reaction is D-glyceraldehyde 3-phosphate + pyruvate + H(+) = 1-deoxy-D-xylulose 5-phosphate + CO2. It participates in metabolic intermediate biosynthesis; 1-deoxy-D-xylulose 5-phosphate biosynthesis; 1-deoxy-D-xylulose 5-phosphate from D-glyceraldehyde 3-phosphate and pyruvate: step 1/1. Catalyzes the acyloin condensation reaction between C atoms 2 and 3 of pyruvate and glyceraldehyde 3-phosphate to yield 1-deoxy-D-xylulose-5-phosphate (DXP). The polypeptide is 1-deoxy-D-xylulose-5-phosphate synthase (Clostridium perfringens (strain 13 / Type A)).